The following is a 158-amino-acid chain: MFDIGWSELLVIGVVALVVVGPKDLPEMFRTLGRVTAKARNMAREFQRAMEAAADETGVKDVVKDVKNVTSPRSMGLDAMKQAADRFEKWDPMKPQQGAPKPAAPASSIPAAKAQQGAGAAAVTAPPASEPAAPVPQAPAAAAPEAASPAPAEPKSNA.

A helical transmembrane segment spans residues 1–21 (MFDIGWSELLVIGVVALVVVG). Residues 73 to 158 (RSMGLDAMKQ…PAPAEPKSNA (86 aa)) are disordered. A compositionally biased stretch (basic and acidic residues) spans 83 to 92 (AADRFEKWDP). Composition is skewed to low complexity over residues 94–132 (KPQQGAPKPAAPASSIPAAKAQQGAGAAAVTAPPASEPA) and 138–158 (APAAAAPEAASPAPAEPKSNA).

Belongs to the TatB family. The Tat system comprises two distinct complexes: a TatABC complex, containing multiple copies of TatA, TatB and TatC subunits, and a separate TatA complex, containing only TatA subunits. Substrates initially bind to the TatABC complex, which probably triggers association of the separate TatA complex to form the active translocon.

It is found in the cell inner membrane. Its function is as follows. Part of the twin-arginine translocation (Tat) system that transports large folded proteins containing a characteristic twin-arginine motif in their signal peptide across membranes. Together with TatC, TatB is part of a receptor directly interacting with Tat signal peptides. TatB may form an oligomeric binding site that transiently accommodates folded Tat precursor proteins before their translocation. The polypeptide is Sec-independent protein translocase protein TatB (Cereibacter sphaeroides (strain ATCC 17029 / ATH 2.4.9) (Rhodobacter sphaeroides)).